Consider the following 84-residue polypeptide: ORF8b protein (84 aa).

The SARS ORF8 Ig-like domain occupies 1-82; that stretch reads MCLKILVRYN…RDVLVVLNKR (82 aa). A disulfide bond links Cys22 and Cys40.

The protein localises to the host cytoplasm. Its subcellular location is the host nucleus. In terms of biological role, non-structural protein which is dispensable for virus replication in cell culture. This Severe acute respiratory syndrome coronavirus (SARS-CoV) protein is ORF8b protein.